The chain runs to 295 residues: Phosphoribosylaminoimidazole-succinocarboxamide synthase (295 aa).

This sequence belongs to the SAICAR synthetase family.

It carries out the reaction 5-amino-1-(5-phospho-D-ribosyl)imidazole-4-carboxylate + L-aspartate + ATP = (2S)-2-[5-amino-1-(5-phospho-beta-D-ribosyl)imidazole-4-carboxamido]succinate + ADP + phosphate + 2 H(+). It participates in purine metabolism; IMP biosynthesis via de novo pathway; 5-amino-1-(5-phospho-D-ribosyl)imidazole-4-carboxamide from 5-amino-1-(5-phospho-D-ribosyl)imidazole-4-carboxylate: step 1/2. This chain is Phosphoribosylaminoimidazole-succinocarboxamide synthase, found in Corynebacterium ammoniagenes (Brevibacterium ammoniagenes).